We begin with the raw amino-acid sequence, 453 residues long: Mogroside IIIx synthase (453 aa).

His21 acts as the Proton acceptor in catalysis. The active-site Charge relay is the Asp122. Positions 273, 336, 354, 355, 356, 359, 375, and 376 each coordinate UDP-alpha-D-glucose.

Belongs to the UDP-glycosyltransferase family. Highly expressed in mature fruits.

It catalyses the reaction mogroside IIE + UDP-alpha-D-glucose = mogroside IIIX + UDP + H(+). The enzyme catalyses mogroside III + UDP-alpha-D-glucose = mogroside IV + UDP + H(+). The catalysed reaction is mogroside III + UDP-alpha-D-glucose = siamenoside I + UDP + H(+). It carries out the reaction mogroside IV + UDP-alpha-D-glucose = mogroside V + UDP + H(+). It participates in secondary metabolite biosynthesis; terpenoid biosynthesis. Functionally, UDP-glycosyltransferase involved in the biosynthesis of cucurbitacin and mogroside tetracyclic triterpene natural products (e.g. siamenoside I and mogrosides IV, V and VI). Cucurbitacins have cytotoxic properties and exhibit deterrent taste as a defense barrier against herbivores. Mogrosides are nonsugar highly oxygenated compounds used as high-intensity zero-calorie sweeteners; they also possess pharmacological properties such as regulating immunity, lowering blood sugar and lipid levels, protecting the liver, and acting as antioxidants and antitumor agents. Catalyzes the branched glucosylations of mogroside II-E, mogroside III and mogroside IV. The protein is Mogroside IIIx synthase of Siraitia grosvenorii (Monk's fruit).